Consider the following 353-residue polypeptide: Polyadenylate-binding protein-interacting protein 10 (353 aa).

A disordered region spans residues 1 to 61 (MAVAENAGVK…IDSTPETDDR (61 aa)). Residues 20–31 (NNNTAASATETT) are compositionally biased toward low complexity. The PAM2-like signature appears at 96–106 (KLNPMAQEFVP). Residues 128 to 159 (AAPPKLADGNDHFPRRRRSFGQGKRRMNKRTS) are disordered. Residues 141–156 (PRRRRSFGQGKRRMNK) are compositionally biased toward basic residues. The short motif at 142 to 153 (RRRRSFGQGKRR) is the Bipartite nuclear localization signal element. RRM domains are found at residues 169–244 (RTVY…PSKT) and 266–341 (RTVY…PSKT).

In terms of tissue distribution, expressed in cauline leaves, stems, rosette leaves, immature siliques and primary inflorescences.

The protein resides in the nucleus. The protein is Polyadenylate-binding protein-interacting protein 10 (CID10) of Arabidopsis thaliana (Mouse-ear cress).